A 274-amino-acid chain; its full sequence is Mitogen-activated protein kinase 4 (274 aa).

Residues 1-8 and Lys23 contribute to the ATP site; that span reads GCGGNGLV. Residues 1–274 enclose the Protein kinase domain; the sequence is GCGGNGLVLS…KILTFSPMDR (274 aa). Residue Asp123 is the Proton acceptor of the active site. Ser160 is subject to Phosphoserine. The SEG motif motif lies at 160 to 162; sequence SEG.

The protein belongs to the protein kinase superfamily. CMGC Ser/Thr protein kinase family. MAP kinase subfamily. Homodimer. Heterodimer with ERK3/MAPK6. Interacts with MAPKAPK5. Mg(2+) serves as cofactor. In terms of processing, phosphorylated by PAK1, PAK2 and PAK3 in the activation loop resulting in catalytic activation. Phosphorylated by MAPKAPK5 at other sites. As to expression, exclusively detected in the brain, where expression is restricted to the choroid plexus and hippocampus, and to a lesser extent in lung.

It is found in the cytoplasm. Its subcellular location is the nucleus. It catalyses the reaction L-seryl-[protein] + ATP = O-phospho-L-seryl-[protein] + ADP + H(+). It carries out the reaction L-threonyl-[protein] + ATP = O-phospho-L-threonyl-[protein] + ADP + H(+). Activated by phosphorylation in the activation loop. In terms of biological role, atypical MAPK protein. Phosphorylates microtubule-associated protein 2 (MAP2) and MAPKAPK5. The precise role of the complex formed with MAPKAPK5 is still unclear, but the complex follows a complex set of phosphorylation events: upon interaction with atypical MAPKAPK5, ERK4/MAPK4 is phosphorylated and then mediates phosphorylation and activation of MAPKAPK5, which in turn phosphorylates ERK4/MAPK4. May promote entry in the cell cycle. The sequence is that of Mitogen-activated protein kinase 4 (Mapk4) from Rattus norvegicus (Rat).